The following is a 325-amino-acid chain: Chain length determinant protein (325 aa).

At 1–31 (MRVENNNVSGQNHDPEQIDLIDLLVQLWRGK) the chain is on the cytoplasmic side. A helical transmembrane segment spans residues 32–52 (MTIIISVIVAIALAIGYLAVA). Residues 53 to 294 (KEKWTSTAIV…LPIRRDSPKK (242 aa)) are Periplasmic-facing. A helical transmembrane segment spans residues 295–315 (AITLILAVLLGGMVGAGIVLG). Residues 316 to 325 (RNALRNYNAK) are Cytoplasmic-facing.

Belongs to the WzzB/Cld/Rol family.

Its subcellular location is the cell inner membrane. Its pathway is bacterial outer membrane biogenesis; lipopolysaccharide biosynthesis. Its function is as follows. Confers a modal distribution of chain length on the O-antigen component of lipopolysaccharide (LPS). Gives rise to a reduced number of short chain molecules and increases in numbers of longer molecules. This is Chain length determinant protein (wzzB) from Shigella dysenteriae.